The sequence spans 248 residues: MLAIISSAKTLNFEKLAPKTELTIPMFLTLTNKLLSTLQSYSENQLSKIMNISAKLAHINKERFKDFDNQESKAAIFAYAGDVFNNIHIEKLTNHALNFLQSHLLIISGLYGGLKPLDTIKPYRLEMATKLNEINLTNFWQDEITNYINKILAKQKNKYLLNLASQEYSSVINPNKLKYQLVNVHFKENRNGKLSTIGINAKKARGAMVKVIANNLIDSPELLKNFSYLGYAFSTKHSSDNELVFIKS.

This sequence belongs to the UPF0246 family.

The protein is UPF0246 protein RAF_ORF0648 of Rickettsia africae (strain ESF-5).